Consider the following 316-residue polypeptide: 4-diphosphocytidyl-2-C-methyl-D-erythritol kinase (316 aa).

Residue K23 is part of the active site. 108 to 118 (PVAGGMAGGSA) is a binding site for ATP. D150 is an active-site residue.

This sequence belongs to the GHMP kinase family. IspE subfamily.

The catalysed reaction is 4-CDP-2-C-methyl-D-erythritol + ATP = 4-CDP-2-C-methyl-D-erythritol 2-phosphate + ADP + H(+). The protein operates within isoprenoid biosynthesis; isopentenyl diphosphate biosynthesis via DXP pathway; isopentenyl diphosphate from 1-deoxy-D-xylulose 5-phosphate: step 3/6. Functionally, catalyzes the phosphorylation of the position 2 hydroxy group of 4-diphosphocytidyl-2C-methyl-D-erythritol. This chain is 4-diphosphocytidyl-2-C-methyl-D-erythritol kinase, found in Mycolicibacterium paratuberculosis (strain ATCC BAA-968 / K-10) (Mycobacterium paratuberculosis).